Reading from the N-terminus, the 363-residue chain is Putative glutamate--cysteine ligase 2 (363 aa).

It belongs to the glutamate--cysteine ligase type 2 family. YbdK subfamily.

It carries out the reaction L-cysteine + L-glutamate + ATP = gamma-L-glutamyl-L-cysteine + ADP + phosphate + H(+). Functionally, ATP-dependent carboxylate-amine ligase which exhibits weak glutamate--cysteine ligase activity. The protein is Putative glutamate--cysteine ligase 2 of Streptomyces coelicolor (strain ATCC BAA-471 / A3(2) / M145).